Consider the following 65-residue polypeptide: Hirudin-3A' (65 aa).

An interaction with thrombin active site region spans residues 1–3 (VVY). 3 cysteine pairs are disulfide-bonded: C6-C14, C16-C28, and C22-C39. A disordered region spans residues 32-65 (SDGEKNECVTGEGTPKPQSHNDGDFEEIPEEYLQ). O-linked (GalNAc...) threonine glycosylation is present at T45. An interaction with fibrinogen-binding exosite of thrombin region spans residues 55-65 (DFEEIPEEYLQ). A compositionally biased stretch (acidic residues) spans 55-65 (DFEEIPEEYLQ). Y63 is subject to Sulfotyrosine.

This sequence belongs to the protease inhibitor I14 (hirudin) family.

The protein localises to the secreted. Its function is as follows. Hirudin is a potent thrombin-specific protease inhibitor. It forms a stable non-covalent complex with alpha-thrombin, thereby abolishing its ability to cleave fibrinogen. This is Hirudin-3A' from Hirudo medicinalis (Medicinal leech).